A 227-amino-acid polypeptide reads, in one-letter code: PKHD-type hydroxylase PHZ_c0292 (227 aa).

In terms of domain architecture, Fe2OG dioxygenase spans 78–178; it reads VVFPPLFNRY…RVCSFFWIQS (101 aa). Positions 96, 98, and 159 each coordinate Fe cation. R169 lines the 2-oxoglutarate pocket.

It depends on Fe(2+) as a cofactor. The cofactor is L-ascorbate.

This is PKHD-type hydroxylase PHZ_c0292 from Phenylobacterium zucineum (strain HLK1).